The chain runs to 498 residues: MRNNPITSDPVVSTLKEQNQGRIAQIIGPVLDVIFPSGKMPNIYNALIIKGRDTVGHQINVTCEVQQLLGNNRVRAVAMSATDGLMRGMKVIDTGAPLSVPVGGATLGRIFNVLGEPVDNLGPVDTRTTFPIHRSAPAFIQLDTKLSIFETGIKVVDLLAPYRRGGKIGLFGGAGVGKTVLIMELINNIAKAHGGVSVFGGVGERTREGNDLYMEMKESGVINEKNIAESKVALVYGQMNEPPGARMRVGLTALTMAEYFRDVNEQDVLLFIDNIFRFVQAGSEVSALLGRMPSAVGYQPTLSTEMGSLQERITSTKEGSITSIQAVYVPADDLTDPAPATTFAHLDATTVLSRGLAAKGIYPAVDPLDSTSTMLQPRIVGEEHYETAQRVKQTSQRYKELQDIIAILGLDELSEEDRLTVARARKIERFLSQPFFVAEVFTGSPGKYVGLAETIRGFQFILSGELDGLPEQAFYLVGNIDEATAKAMNLEEESKLKK.

An ATP-binding site is contributed by 172-179 (GGAGVGKT).

It belongs to the ATPase alpha/beta chains family. In terms of assembly, F-type ATPases have 2 components, CF(1) - the catalytic core - and CF(0) - the membrane proton channel. CF(1) has five subunits: alpha(3), beta(3), gamma(1), delta(1), epsilon(1). CF(0) has four main subunits: a(1), b(1), b'(1) and c(9-12).

It localises to the plastid. It is found in the chloroplast thylakoid membrane. The catalysed reaction is ATP + H2O + 4 H(+)(in) = ADP + phosphate + 5 H(+)(out). Functionally, produces ATP from ADP in the presence of a proton gradient across the membrane. The catalytic sites are hosted primarily by the beta subunits. The polypeptide is ATP synthase subunit beta, chloroplastic (Phalaenopsis aphrodite subsp. formosana (Moth orchid)).